The sequence spans 272 residues: Magnetosome protein MamQ 1 (272 aa).

The Cytoplasmic segment spans residues 1–46 (MALGDANVGSAPGVDFSALQRVKQSEELLAQLYVVEETPRRLGRGP). Residues 47–67 (VHALMVISVLSVVAFIATLLM) traverse the membrane as a helical segment. Residues 68–272 (RYNTFVTMSE…PLNHAQDIKK (205 aa)) lie on the Lumenal side of the membrane.

Belongs to the LemA family.

The protein localises to the magnetosome membrane. Functionally, essential for magnetosome formation. Can be used to induce magnetosome formation. This chain is Magnetosome protein MamQ 1 (mamQ1), found in Paramagnetospirillum magneticum (strain ATCC 700264 / AMB-1) (Magnetospirillum magneticum).